The sequence spans 218 residues: DNA-directed RNA polymerase III subunit RPC7-like (218 aa).

The interval 130-218 is disordered; sequence TIILPKRPPK…SDDNMDEAIY (89 aa). A compositionally biased stretch (basic and acidic residues) spans 139-160; sequence KSTDDKEETIQKLETLEKKEEE. Composition is skewed to acidic residues over residues 161–193 and 201–218; these read VTSE…EETD and NGED…EAIY.

This sequence belongs to the eukaryotic RPC7 RNA polymerase subunit family. As to quaternary structure, component of the RNA polymerase III (Pol III) complex consisting of 17 subunits. Pol III exists as two alternative complexes defined by the mutually exclusive incorporation of subunit POLR3G/RPC7alpha or POLR3GL/RPC7beta. Found in a trimeric complex with POLR3C/RPC3 and POLR3F/RPC6. Directly interacts with POLR3C. In terms of tissue distribution, expressed in the liver.

The protein resides in the nucleus. In terms of biological role, DNA-dependent RNA polymerase catalyzes the transcription of DNA into RNA using the four ribonucleoside triphosphates as substrates. Specific peripheric component of RNA polymerase III which synthesizes small RNAs, such as 5S rRNA and tRNAs. This Mus musculus (Mouse) protein is DNA-directed RNA polymerase III subunit RPC7-like.